The sequence spans 282 residues: Pantothenate synthetase (282 aa).

ATP is bound at residue Met30–His37. Residue His37 is the Proton donor of the active site. Gln61 is a binding site for (R)-pantoate. Residue Gln61 participates in beta-alanine binding. Gly147–Asp150 is a binding site for ATP. Gln153 provides a ligand contact to (R)-pantoate. ATP is bound by residues Val176 and Lys184–Arg187.

The protein belongs to the pantothenate synthetase family. In terms of assembly, homodimer.

It is found in the cytoplasm. It catalyses the reaction (R)-pantoate + beta-alanine + ATP = (R)-pantothenate + AMP + diphosphate + H(+). Its pathway is cofactor biosynthesis; (R)-pantothenate biosynthesis; (R)-pantothenate from (R)-pantoate and beta-alanine: step 1/1. Catalyzes the condensation of pantoate with beta-alanine in an ATP-dependent reaction via a pantoyl-adenylate intermediate. In Bacillus cereus (strain AH187), this protein is Pantothenate synthetase.